The chain runs to 126 residues: Prefoldin subunit beta (126 aa).

The protein belongs to the prefoldin subunit beta family. In terms of assembly, heterohexamer of two alpha and four beta subunits.

Its subcellular location is the cytoplasm. Molecular chaperone capable of stabilizing a range of proteins. Seems to fulfill an ATP-independent, HSP70-like function in archaeal de novo protein folding. This is Prefoldin subunit beta (pfdB) from Pyrobaculum aerophilum (strain ATCC 51768 / DSM 7523 / JCM 9630 / CIP 104966 / NBRC 100827 / IM2).